A 301-amino-acid chain; its full sequence is ATP synthase gamma chain (301 aa).

The protein belongs to the ATPase gamma chain family. F-type ATPases have 2 components, CF(1) - the catalytic core - and CF(0) - the membrane proton channel. CF(1) has five subunits: alpha(3), beta(3), gamma(1), delta(1), epsilon(1). CF(0) has three main subunits: a, b and c.

It localises to the cell inner membrane. Functionally, produces ATP from ADP in the presence of a proton gradient across the membrane. The gamma chain is believed to be important in regulating ATPase activity and the flow of protons through the CF(0) complex. The chain is ATP synthase gamma chain from Helicobacter pylori (strain HPAG1).